An 85-amino-acid chain; its full sequence is Large ribosomal subunit protein bL27 (85 aa).

Residues 1–21 (MAHKKGVGSSKNGRESESKRL) form a disordered region.

It belongs to the bacterial ribosomal protein bL27 family.

This chain is Large ribosomal subunit protein bL27, found in Porphyromonas gingivalis (strain ATCC 33277 / DSM 20709 / CIP 103683 / JCM 12257 / NCTC 11834 / 2561).